The following is a 292-amino-acid chain: Protease HtpX (292 aa).

2 helical membrane passes run 4–24 (IALF…VLSL) and 34–54 (GLMI…LLMS). His-139 is a binding site for Zn(2+). Glu-140 is a catalytic residue. His-143 is a binding site for Zn(2+). 2 helical membrane passes run 158–178 (IVNT…AGFL) and 192–212 (MIYF…ASII). Zn(2+) is bound at residue Glu-221.

This sequence belongs to the peptidase M48B family. Zn(2+) serves as cofactor.

The protein localises to the cell inner membrane. This Serratia proteamaculans (strain 568) protein is Protease HtpX.